Here is a 160-residue protein sequence, read N- to C-terminus: Large ribosomal subunit protein uL30m (160 aa).

The transit peptide at 1–34 (MAGVLRSVFQRPPGRLQTVKKGAESLIGTEWIRH) directs the protein to the mitochondrion. Positions 45–64 (VFQPRPEDHEKYGGDPQNPH) are disordered.

This sequence belongs to the universal ribosomal protein uL30 family. As to quaternary structure, component of the mitochondrial ribosome large subunit (39S) which comprises a 16S rRNA and about 50 distinct proteins.

It is found in the mitochondrion. This chain is Large ribosomal subunit protein uL30m (Mrpl30), found in Rattus norvegicus (Rat).